Here is a 655-residue protein sequence, read N- to C-terminus: UvrABC system protein B (655 aa).

Positions 25 to 181 (DGINKGEKEQ…IRKLVFMQYE (157 aa)) constitute a Helicase ATP-binding domain. 38 to 45 (GVTGSGKT) serves as a coordination point for ATP. The short motif at 91–114 (YYDYYQPEAYVPRTDTFIDKESSV) is the Beta-hairpin element. The 163-residue stretch at 428 to 590 (QVEDLLGEVK…IVPKTTKRAL (163 aa)) folds into the Helicase C-terminal domain. The UVR domain maps to 615-650 (RLLISDLENDMKEAAAKLDFERAASLRDQIATLKGL).

The protein belongs to the UvrB family. As to quaternary structure, forms a heterotetramer with UvrA during the search for lesions. Interacts with UvrC in an incision complex.

It localises to the cytoplasm. In terms of biological role, the UvrABC repair system catalyzes the recognition and processing of DNA lesions. A damage recognition complex composed of 2 UvrA and 2 UvrB subunits scans DNA for abnormalities. Upon binding of the UvrA(2)B(2) complex to a putative damaged site, the DNA wraps around one UvrB monomer. DNA wrap is dependent on ATP binding by UvrB and probably causes local melting of the DNA helix, facilitating insertion of UvrB beta-hairpin between the DNA strands. Then UvrB probes one DNA strand for the presence of a lesion. If a lesion is found the UvrA subunits dissociate and the UvrB-DNA preincision complex is formed. This complex is subsequently bound by UvrC and the second UvrB is released. If no lesion is found, the DNA wraps around the other UvrB subunit that will check the other stand for damage. This is UvrABC system protein B from Methanobrevibacter smithii (strain ATCC 35061 / DSM 861 / OCM 144 / PS).